Here is a 442-residue protein sequence, read N- to C-terminus: 26S proteasome non-ATPase regulatory subunit 12 homolog B (442 aa).

Positions 1-129 (MEESRQLESS…KEEQGLIAEA (129 aa)) form a coiled coil. Positions 232 to 403 (EICRSYKAIY…GIICFQIVKD (172 aa)) constitute a PCI domain.

Belongs to the proteasome subunit p55 family. In terms of assembly, component of the 19S regulatory particle (RP/PA700) lid subcomplex of the 26S proteasome. The 26S proteasome is composed of a core protease (CP), known as the 20S proteasome, capped at one or both ends by the 19S regulatory particle (RP/PA700). The RP/PA700 complex is composed of at least 17 different subunits in two subcomplexes, the base and the lid, which form the portions proximal and distal to the 20S proteolytic core, respectively. In terms of tissue distribution, ubiquitous with highest expression in flowers.

The protein resides in the cytoplasm. It localises to the nucleus. Its function is as follows. Acts as a regulatory subunit of the 26 proteasome which is involved in the ATP-dependent degradation of ubiquitinated proteins. Acts redundantly with RPN5A. This is 26S proteasome non-ATPase regulatory subunit 12 homolog B (RPN5B) from Arabidopsis thaliana (Mouse-ear cress).